A 464-amino-acid polypeptide reads, in one-letter code: Kynurenine 3-monooxygenase (464 aa).

The protein belongs to the aromatic-ring hydroxylase family. KMO subfamily. It depends on FAD as a cofactor.

It catalyses the reaction L-kynurenine + NADPH + O2 + H(+) = 3-hydroxy-L-kynurenine + NADP(+) + H2O. Its pathway is cofactor biosynthesis; NAD(+) biosynthesis; quinolinate from L-kynurenine: step 1/3. In terms of biological role, catalyzes the hydroxylation of L-kynurenine (L-Kyn) to form 3-hydroxy-L-kynurenine (L-3OHKyn). Required for synthesis of quinolinic acid. This is Kynurenine 3-monooxygenase from Myxococcus xanthus (strain DK1622).